We begin with the raw amino-acid sequence, 530 residues long: Sulfate adenylyltransferase (530 aa).

The segment at 1 to 178 is N-terminal; that stretch reads MPIPAPHGGK…IQGLDYPTHY (178 aa). Residues 179–410 form a catalytic region; it reads DYIPFRKTPT…LRESNPPRSK (232 aa). Q208 contacts sulfate. Residues 208 to 211 and 304 to 307 contribute to the ATP site; these read QTRN and GRDH. Catalysis depends on residues T209, R210, and N211. R210 contacts sulfate. A308 contacts sulfate. V348 lines the ATP pocket. The tract at residues 411 to 530 is required for oligomerization; adenylyl-sulfate kinase-like; that stretch reads QGFAIVIDSS…LVSQGFYQQS (120 aa).

The protein belongs to the sulfate adenylyltransferase family. As to quaternary structure, homohexamer. Dimer of trimers.

Its subcellular location is the cytoplasm. The enzyme catalyses sulfate + ATP + H(+) = adenosine 5'-phosphosulfate + diphosphate. The protein operates within sulfur metabolism; hydrogen sulfide biosynthesis; sulfite from sulfate: step 1/3. Catalyzes the first intracellular reaction of sulfate assimilation, forming adenosine-5'-phosphosulfate (APS) from inorganic sulfate and ATP. Plays an important role in sulfate activation as a component of the biosynthesis pathway of sulfur-containing amino acids. The sequence is that of Sulfate adenylyltransferase from Debaryomyces hansenii (strain ATCC 36239 / CBS 767 / BCRC 21394 / JCM 1990 / NBRC 0083 / IGC 2968) (Yeast).